Here is a 288-residue protein sequence, read N- to C-terminus: 33 kDa chaperonin (288 aa).

Intrachain disulfides connect Cys236–Cys238 and Cys269–Cys272.

The protein belongs to the HSP33 family. Under oxidizing conditions two disulfide bonds are formed involving the reactive cysteines. Under reducing conditions zinc is bound to the reactive cysteines and the protein is inactive.

Its subcellular location is the cytoplasm. Redox regulated molecular chaperone. Protects both thermally unfolding and oxidatively damaged proteins from irreversible aggregation. Plays an important role in the bacterial defense system toward oxidative stress. The chain is 33 kDa chaperonin from Lactococcus lactis subsp. cremoris (strain SK11).